The following is a 289-amino-acid chain: 4-hydroxy-3-methylbut-2-enyl diphosphate reductase (289 aa).

Residue Cys12 participates in [4Fe-4S] cluster binding. (2E)-4-hydroxy-3-methylbut-2-enyl diphosphate-binding residues include His44 and His81. The dimethylallyl diphosphate site is built by His44 and His81. His44 and His81 together coordinate isopentenyl diphosphate. Cys103 is a binding site for [4Fe-4S] cluster. His130 is a (2E)-4-hydroxy-3-methylbut-2-enyl diphosphate binding site. His130 contributes to the dimethylallyl diphosphate binding site. His130 is a binding site for isopentenyl diphosphate. Glu132 serves as the catalytic Proton donor. Thr174 contacts (2E)-4-hydroxy-3-methylbut-2-enyl diphosphate. Residue Cys202 participates in [4Fe-4S] cluster binding. (2E)-4-hydroxy-3-methylbut-2-enyl diphosphate-binding residues include Ser230, Asn232, and Ser273. Dimethylallyl diphosphate contacts are provided by Ser230, Asn232, and Ser273. Isopentenyl diphosphate-binding residues include Ser230, Asn232, and Ser273.

Belongs to the IspH family. Requires [4Fe-4S] cluster as cofactor.

The enzyme catalyses isopentenyl diphosphate + 2 oxidized [2Fe-2S]-[ferredoxin] + H2O = (2E)-4-hydroxy-3-methylbut-2-enyl diphosphate + 2 reduced [2Fe-2S]-[ferredoxin] + 2 H(+). It catalyses the reaction dimethylallyl diphosphate + 2 oxidized [2Fe-2S]-[ferredoxin] + H2O = (2E)-4-hydroxy-3-methylbut-2-enyl diphosphate + 2 reduced [2Fe-2S]-[ferredoxin] + 2 H(+). It participates in isoprenoid biosynthesis; dimethylallyl diphosphate biosynthesis; dimethylallyl diphosphate from (2E)-4-hydroxy-3-methylbutenyl diphosphate: step 1/1. It functions in the pathway isoprenoid biosynthesis; isopentenyl diphosphate biosynthesis via DXP pathway; isopentenyl diphosphate from 1-deoxy-D-xylulose 5-phosphate: step 6/6. Its function is as follows. Catalyzes the conversion of 1-hydroxy-2-methyl-2-(E)-butenyl 4-diphosphate (HMBPP) into a mixture of isopentenyl diphosphate (IPP) and dimethylallyl diphosphate (DMAPP). Acts in the terminal step of the DOXP/MEP pathway for isoprenoid precursor biosynthesis. The sequence is that of 4-hydroxy-3-methylbut-2-enyl diphosphate reductase from Treponema denticola (strain ATCC 35405 / DSM 14222 / CIP 103919 / JCM 8153 / KCTC 15104).